We begin with the raw amino-acid sequence, 247 residues long: 14-3-3 protein gamma-1 (247 aa).

Belongs to the 14-3-3 family. As to quaternary structure, homodimer, and heterodimer with other family members.

Its subcellular location is the cytoplasm. Its function is as follows. Adapter protein implicated in the regulation of a large spectrum of both general and specialized signaling pathways. Binds to a large number of partners, usually by recognition of a phosphoserine or phosphothreonine motif. Binding generally results in the modulation of the activity of the binding partner. This chain is 14-3-3 protein gamma-1 (ywhag1), found in Danio rerio (Zebrafish).